Here is a 170-residue protein sequence, read N- to C-terminus: Ribosome maturation factor RimM (170 aa).

Residues 97-170 form the PRC barrel domain; sequence HPDEYYWVDL…RIVVDWDPEF (74 aa).

It belongs to the RimM family. As to quaternary structure, binds ribosomal protein uS19.

The protein resides in the cytoplasm. Its function is as follows. An accessory protein needed during the final step in the assembly of 30S ribosomal subunit, possibly for assembly of the head region. Essential for efficient processing of 16S rRNA. May be needed both before and after RbfA during the maturation of 16S rRNA. It has affinity for free ribosomal 30S subunits but not for 70S ribosomes. In Xylella fastidiosa (strain M12), this protein is Ribosome maturation factor RimM.